The following is a 691-amino-acid chain: MSDYLVIVESPAKAKTIERYLGKKYKVKASMGHVRDLPKSQMGVDIEQNFEPKYITIRGKGPVLKELKTAAKKAKKVYLAADPDREGEAIAWHLAHSLDLDLNSDCRVVFNEITKDAIKESFKHPRMINMDLVDAQQARRILDRLVGYKISPILWKKVKKGLSAGRVQSVALRLIIDREKEINDFKPEEYWTIDGTFLKGQETFEASFFGKNGKKLPLNSEADVKEILSQLKGNQYTVEKVTKKERKRNPALPFTTSTLQQEAARKLNFRAKKTMMIAQQLYEGIDLGREGTVGLITYMRTDSTRISNTAVDEAAAFIDQTYGKEFLGGKRKPAKKNENAQDAHEAIRPTSVLRKPSELKAVLGRDQMRLYKLIWERFVASQMAPAVLDTMSVDLTNNGLTFRANGSKVKFSGFMKVYVEGKDDQMEEKDRMLPDLQEGDTVLSKDIEPEQHFTQPPPRYTEARLVKTLEERGIGRPSTYAPTLDTIQRRGYVALDNKRFVPTELGQIVLDLIMEFFPEIINVEFTAKMERDLDHVEEGNTEWVKIIDNFYTDFEKRVKKAESEMKEVEIEPEYAGEDCELCSSPMVYKMGRYGKFLACSNFPDCRNTKPIVKQIGVKCPSCGEGNIVERKSKKKRVFYGCDRYPDCEFVSWDKPIERKCPKCGKMLVEKKLKKGIQVQCVECDYKEEPQK.

Residues 3–114 form the Toprim domain; the sequence is DYLVIVESPA…DCRVVFNEIT (112 aa). The Mg(2+) site is built by Glu-9 and Asp-82. The region spanning 129–558 is the Topo IA-type catalytic domain; the sequence is NMDLVDAQQA…NFYTDFEKRV (430 aa). The tract at residues 163–168 is interaction with DNA; the sequence is SAGRVQ. The O-(5'-phospho-DNA)-tyrosine intermediate role is filled by Tyr-298. C4-type zinc fingers lie at residues 579-605, 619-647, and 660-683; these read CELC…FPDC, CPSC…YPDC, and CPKC…CVEC.

Belongs to the type IA topoisomerase family. As to quaternary structure, monomer. Interacts with the RNA polymerase core. It depends on Mg(2+) as a cofactor.

The enzyme catalyses ATP-independent breakage of single-stranded DNA, followed by passage and rejoining.. Its function is as follows. Releases the supercoiling and torsional tension of DNA, which is introduced during the DNA replication and transcription, by transiently cleaving and rejoining one strand of the DNA duplex. Introduces a single-strand break via transesterification at a target site in duplex DNA. The scissile phosphodiester is attacked by the catalytic tyrosine of the enzyme, resulting in the formation of a DNA-(5'-phosphotyrosyl)-enzyme intermediate and the expulsion of a 3'-OH DNA strand. The free DNA strand then undergoes passage around the unbroken strand, thus removing DNA supercoils. Finally, in the religation step, the DNA 3'-OH attacks the covalent intermediate to expel the active-site tyrosine and restore the DNA phosphodiester backbone. The polypeptide is DNA topoisomerase 1 (Bacillus subtilis (strain 168)).